A 484-amino-acid polypeptide reads, in one-letter code: Phosphoenolpyruvate carboxylase (484 aa).

This sequence belongs to the PEPCase type 2 family. Homotetramer. Mg(2+) serves as cofactor.

The enzyme catalyses oxaloacetate + phosphate = phosphoenolpyruvate + hydrogencarbonate. Catalyzes the irreversible beta-carboxylation of phosphoenolpyruvate (PEP) to form oxaloacetate (OAA), a four-carbon dicarboxylic acid source for the tricarboxylic acid cycle. In Methanospirillum hungatei JF-1 (strain ATCC 27890 / DSM 864 / NBRC 100397 / JF-1), this protein is Phosphoenolpyruvate carboxylase.